The following is a 451-amino-acid chain: PTS system galactose-specific EIIC component (451 aa).

One can recognise a PTS EIIC type-3 domain in the interval 8-427 (LNKTLMPLAS…VLNVLIYYPF (420 aa)). The next 11 helical transmembrane spans lie at 40-60 (LGIALLTIIGYFPVPAWVDFL), 69-89 (FSAVIGAVTSALAIYVTYNFA), 104-124 (GLLSIASLLMLMPQIITVPVV), 151-171 (TGSTGLIVAIIIGFIVSLVYI), 190-210 (VVDSLSPAIISMVIFCLMFGI), 239-259 (ANPWVLMGIFTFGNFLWFFGI), 263-283 (LIGGILNPLLLTMSYANIDAY), 296-316 (IVFAVGANAWGGSGNTYGLVI), 332-352 (LGAIPSIFNISEPLLFGLPMM), 356-376 (LFFIPLVFQPAILGTVALGLA), and 403-423 (ISGGLPFLIIFAICLVLNVLI).

The protein resides in the cell membrane. The phosphoenolpyruvate-dependent sugar phosphotransferase system (PTS), a major carbohydrate active transport system, catalyzes the phosphorylation of incoming sugar substrates concomitant with their translocation across the cell membrane. Involved in galactose transport with PtcA and PtcB. This is PTS system galactose-specific EIIC component from Lactococcus lactis subsp. cremoris (strain MG1363).